The primary structure comprises 212 residues: Probable GTP-binding protein EngB (212 aa).

An EngB-type G domain is found at 23-197 (TGIEVAFAGR…ERILDGWFGL (175 aa)). GTP is bound by residues 31 to 38 (GRSNAGKS), 58 to 62 (GRTQL), 76 to 79 (DLPG), 143 to 146 (TKAD), and 176 to 178 (FSS). Residues Ser-38 and Thr-60 each contribute to the Mg(2+) site.

This sequence belongs to the TRAFAC class TrmE-Era-EngA-EngB-Septin-like GTPase superfamily. EngB GTPase family. The cofactor is Mg(2+).

In terms of biological role, necessary for normal cell division and for the maintenance of normal septation. This is Probable GTP-binding protein EngB from Alteromonas mediterranea (strain DSM 17117 / CIP 110805 / LMG 28347 / Deep ecotype).